A 179-amino-acid polypeptide reads, in one-letter code: Large ribosomal subunit protein uL5 (179 aa).

The protein belongs to the universal ribosomal protein uL5 family. As to quaternary structure, part of the 50S ribosomal subunit; part of the 5S rRNA/L5/L18/L25 subcomplex. Contacts the 5S rRNA and the P site tRNA. Forms a bridge to the 30S subunit in the 70S ribosome.

Functionally, this is one of the proteins that bind and probably mediate the attachment of the 5S RNA into the large ribosomal subunit, where it forms part of the central protuberance. In the 70S ribosome it contacts protein S13 of the 30S subunit (bridge B1b), connecting the 2 subunits; this bridge is implicated in subunit movement. Contacts the P site tRNA; the 5S rRNA and some of its associated proteins might help stabilize positioning of ribosome-bound tRNAs. The chain is Large ribosomal subunit protein uL5 from Marinobacter nauticus (strain ATCC 700491 / DSM 11845 / VT8) (Marinobacter aquaeolei).